A 317-amino-acid chain; its full sequence is Heme A synthase (317 aa).

At 1 to 6 (MQRSLK) the chain is on the cytoplasmic side. A helical membrane pass occupies residues 7 to 27 (WFASTTTVAMLFVLIGGALVT). The Extracellular portion of the chain corresponds to 28–54 (KTDSGMGCGRSWPLCHGQWIPDDITPQ). A disulfide bridge connects residues cysteine 35 and cysteine 42. Residues 55 to 75 (LVIELSHRLVSGLAAIMVLIL) traverse the membrane as a helical segment. The active site involves glutamate 58. Histidine 61 lines the heme o pocket. Over 76–91 (CIRSWRVMGHVRETKP) the chain is Cytoplasmic. A helical membrane pass occupies residues 92–112 (LAVLSFVFLVLQSLIGAAAVV). The Extracellular portion of the chain corresponds to 113–123 (WGQSDFVMALH). Histidine 123 contributes to the heme o binding site. The helical transmembrane segment at 124-144 (FGISLISFAAVLLLTLLIFVV) threads the bilayer. Topologically, residues 145 to 159 (DKKFSPTSLQLDGQM) are cytoplasmic. The chain crosses the membrane as a helical span at residues 160-180 (RFHIYGIIIYSYLVVYTGALV). The Extracellular segment spans residues 181 to 214 (RHTNASLACPSWPLCAKSRLLPVQFHEWVQMGHR). Cysteine 189 and cysteine 195 form a disulfide bridge. Position 213 (histidine 213) interacts with heme b. A helical membrane pass occupies residues 215 to 235 (LAAAVIIIWIAVATVHAARYY). Topologically, residues 236–243 (REQPVIYY) are cytoplasmic. A helical membrane pass occupies residues 244-264 (GWIISLLLVLAQMVTGALVVF). Residues 265–272 (TELNLYIS) are Extracellular-facing. The helical transmembrane segment at 273 to 293 (LAHAFFISCLFGVLSYLLLLA) threads the bilayer. Histidine 275 contacts heme b. Over 294–317 (LRTRRRPATAAGRSVEDTASAPLK) the chain is Cytoplasmic.

It belongs to the COX15/CtaA family. Type 1 subfamily. As to quaternary structure, interacts with CtaB. Heme b serves as cofactor.

It localises to the cell membrane. It catalyses the reaction Fe(II)-heme o + 2 A + H2O = Fe(II)-heme a + 2 AH2. Its pathway is porphyrin-containing compound metabolism; heme A biosynthesis; heme A from heme O: step 1/1. Functionally, catalyzes the conversion of heme O to heme A by two successive hydroxylations of the methyl group at C8. The first hydroxylation forms heme I, the second hydroxylation results in an unstable dihydroxymethyl group, which spontaneously dehydrates, resulting in the formyl group of heme A. This is Heme A synthase from Geobacillus thermodenitrificans.